A 360-amino-acid chain; its full sequence is Photosystem II protein D1 (360 aa).

Transmembrane regions (helical) follow at residues 29 to 46, 118 to 133, and 142 to 156; these read YVGWFGTLMIPTLLTATT, QFLIGIFCYMGRQWEL, and WICVAYSAPVSARTA. Tyrosine 126 is a binding site for pheophytin a. The [CaMn4O5] cluster site is built by aspartate 170 and glutamate 189. The chain crosses the membrane as a helical span at residues 197–218; that stretch reads FHMLGVAGVFGGSLFSAMHGSL. Position 198 (histidine 198) interacts with chlorophyll a. Residues histidine 215 and 264 to 265 each bind a quinone; that span reads SF. Histidine 215 contacts Fe cation. A Fe cation-binding site is contributed by histidine 272. A helical transmembrane segment spans residues 274–288; the sequence is FLGAWPVIGIWFTAM. [CaMn4O5] cluster-binding residues include histidine 332, glutamate 333, aspartate 342, and alanine 344. Positions 345–360 are excised as a propeptide; it reads SGEQAPVALTAPAING.

The protein belongs to the reaction center PufL/M/PsbA/D family. As to quaternary structure, PSII is composed of 1 copy each of membrane proteins PsbA, PsbB, PsbC, PsbD, PsbE, PsbF, PsbH, PsbI, PsbJ, PsbK, PsbL, PsbM, PsbT, PsbX, PsbY, PsbZ, Psb30/Ycf12, peripheral proteins PsbO, CyanoQ (PsbQ), PsbU, PsbV and a large number of cofactors. It forms dimeric complexes. It depends on The D1/D2 heterodimer binds P680, chlorophylls that are the primary electron donor of PSII, and subsequent electron acceptors. It shares a non-heme iron and each subunit binds pheophytin, quinone, additional chlorophylls, carotenoids and lipids. D1 provides most of the ligands for the Mn4-Ca-O5 cluster of the oxygen-evolving complex (OEC). There is also a Cl(-1) ion associated with D1 and D2, which is required for oxygen evolution. The PSII complex binds additional chlorophylls, carotenoids and specific lipids. as a cofactor. In terms of processing, tyr-161 forms a radical intermediate that is referred to as redox-active TyrZ, YZ or Y-Z. Post-translationally, C-terminally processed by CtpA; processing is essential to allow assembly of the oxygen-evolving complex and thus photosynthetic growth.

Its subcellular location is the cellular thylakoid membrane. It carries out the reaction 2 a plastoquinone + 4 hnu + 2 H2O = 2 a plastoquinol + O2. In terms of biological role, photosystem II (PSII) is a light-driven water:plastoquinone oxidoreductase that uses light energy to abstract electrons from H(2)O, generating O(2) and a proton gradient subsequently used for ATP formation. It consists of a core antenna complex that captures photons, and an electron transfer chain that converts photonic excitation into a charge separation. The D1/D2 (PsbA/PsbD) reaction center heterodimer binds P680, the primary electron donor of PSII as well as several subsequent electron acceptors. This chain is Photosystem II protein D1, found in Synechocystis sp. (strain PCC 6714) (Aphanocapsa sp. (strain PCC 6714)).